We begin with the raw amino-acid sequence, 385 residues long: S-adenosylmethionine synthase (385 aa).

H16 lines the ATP pocket. D18 lines the Mg(2+) pocket. Residue E44 coordinates K(+). L-methionine-binding residues include E57 and Q100. Residues 100–110 (QSPDINQGVDR) are flexible loop. ATP-binding positions include 164-166 (DGK), 230-231 (KF), D239, 245-246 (RK), A262, and K266. Position 239 (D239) interacts with L-methionine. K270 provides a ligand contact to L-methionine.

This sequence belongs to the AdoMet synthase family. As to quaternary structure, homotetramer; dimer of dimers. Mg(2+) is required as a cofactor. It depends on K(+) as a cofactor.

It localises to the cytoplasm. It catalyses the reaction L-methionine + ATP + H2O = S-adenosyl-L-methionine + phosphate + diphosphate. It functions in the pathway amino-acid biosynthesis; S-adenosyl-L-methionine biosynthesis; S-adenosyl-L-methionine from L-methionine: step 1/1. In terms of biological role, catalyzes the formation of S-adenosylmethionine (AdoMet) from methionine and ATP. The overall synthetic reaction is composed of two sequential steps, AdoMet formation and the subsequent tripolyphosphate hydrolysis which occurs prior to release of AdoMet from the enzyme. The sequence is that of S-adenosylmethionine synthase from Helicobacter pylori (strain Shi470).